Consider the following 481-residue polypeptide: uncharacterized protein (481 aa).

The protein belongs to the UbiD family.

This is an uncharacterized protein from Archaeoglobus fulgidus (strain ATCC 49558 / DSM 4304 / JCM 9628 / NBRC 100126 / VC-16).